The primary structure comprises 310 residues: Homeobox protein dsc-1 (310 aa).

The segment at residues Arg180 to Glu239 is a DNA-binding region (homeobox). The segment at Cys262 to Gln310 is disordered. Polar residues predominate over residues Gly281 to Gln298.

As to expression, expressed in the bilateral sensory neurons AWA, AWB, AWC, ASE, FLP and PVD. Also expressed in the enteric intestinal and anal depressor muscles.

It localises to the nucleus. It is found in the cell projection. Its subcellular location is the axon. The protein localises to the cytoplasm. Functionally, transcriptional regulator which plays a role in the expulsion step of defecation by controlling enteric muscle-specific expression of exp-1 which is required for enteric muscle contraction. Not required for exp-1 expression in the PDA neuron. Also involved in controlling the length of the defecation cycle. In Caenorhabditis elegans, this protein is Homeobox protein dsc-1.